We begin with the raw amino-acid sequence, 350 residues long: Phenylalanine--tRNA ligase alpha subunit (350 aa).

A Mg(2+)-binding site is contributed by E257.

Belongs to the class-II aminoacyl-tRNA synthetase family. Phe-tRNA synthetase alpha subunit type 1 subfamily. As to quaternary structure, tetramer of two alpha and two beta subunits. Mg(2+) serves as cofactor.

It localises to the cytoplasm. The enzyme catalyses tRNA(Phe) + L-phenylalanine + ATP = L-phenylalanyl-tRNA(Phe) + AMP + diphosphate + H(+). The chain is Phenylalanine--tRNA ligase alpha subunit from Listeria welshimeri serovar 6b (strain ATCC 35897 / DSM 20650 / CCUG 15529 / CIP 8149 / NCTC 11857 / SLCC 5334 / V8).